Reading from the N-terminus, the 956-residue chain is MSLPSRQTAIVNPPPPEYINTKKSGRLTNQLQFLQRVVLKALWKHGFSWPFQQPVDAVKLKLPDYYTIIKTPMDLNTIKKRLENKYYEKASECIEDFNTMFSNCYLYNKTGDDIVVMAQALEKLFMQKLSQMPQEEQVVGGKERIKKDIQQKIAVSSAKEQIPSKAAENVFKRQEIPSGLPDISLSPLNMAQEAPPICDSQSLVQITKGVKRRADTTTPTTSIAKASSESPPTLRETKPVNMPVKENTVKNVLPDSQQQHKVLKTVKVTEQLKHCSEILKEMLAKKHLPYAWPFYNPVDADALGLHNYYDVVKNPMDLGTIKGKMDNQEYKDAYEFAADVRLMFMNCYKYNPPDHEVVAMARTLQDVFELHFAKIPDEPIESMHACHLTTNSAQALSRESSSEASSGDASSEDSEDERVQHLAKLQEQLNAVHQQLQVLSQVPLRKLKKKNEKSKRAPKRKKVNNRDENPRKKPKQMKQKEKAKINQPKKKKPLLKSEEEDNAKPMNYDEKRQLSLDINKLPGDKLGRIVHIIQSREPSLRNSNPDEIEIDFETLKASTLRELEKYVLACLRKRSLKPQAKKVVRSKEELHSEKKLELERRLLDVNNQLNCRKRQTKRPAKVEKPPPPPPPPPPPPPPPELASGSRLTDSSSSSGSGSGSSSSSSGSSSSSSSSGSASSSSDSSSSDSSDSEPEIFPKFTGVKQNDLPPKENIKQIQSSVQDITSAEAPLAQQSTAPCGAPGKHSQQMLGCQVTQHLQATENTASVQTQPLSGDCKRVLLGPPVVHTSAESLTVLEPECHAPAQKDIKIKNADSWKSLGKPVKASSVLKSSDELFNQFRKAAIEKEVKARTQEQMRKHLEHNAKDPKVSQENQREPGSGLTLESLSSKVQDKSLEEDQSEQQPPSEAQDVSKLWLLKDRNLAREKEQERRRREAMAGTIDMTLQSDIMTMFENNFD.

The region spanning 26–132 (RLTNQLQFLQ…KLFMQKLSQM (107 aa)) is the Bromo 1 domain. Ser186 carries the phosphoserine modification. The short motif at 208–219 (KGVKRRADTTTP) is the Nuclear localization signal element. The interval 210–239 (VKRRADTTTPTTSIAKASSESPPTLRETKP) is disordered. Polar residues predominate over residues 216–231 (TTTPTTSIAKASSESP). A Bromo 2 domain is found at 266-375 (VKVTEQLKHC…DVFELHFAKI (110 aa)). 4 disordered regions span residues 391–420 (NSAQ…ERVQ), 442–508 (VPLR…PMNY), 607–747 (NQLN…HSQQ), and 859–934 (LEHN…RREA). The segment covering 392–409 (SAQALSRESSSEASSGDA) has biased composition (low complexity). The stretch at 417 to 442 (ERVQHLAKLQEQLNAVHQQLQVLSQV) forms a coiled coil. The span at 445-463 (RKLKKKNEKSKRAPKRKKV) shows a compositional bias: basic residues. The NET domain occupies 496–578 (KSEEEDNAKP…ACLRKRSLKP (83 aa)). Pro residues predominate over residues 625-640 (PPPPPPPPPPPPPPPE). The span at 649–688 (DSSSSSGSGSGSSSSSSGSSSSSSSSGSASSSSDSSSSDS) shows a compositional bias: low complexity. Positions 714–724 (KQIQSSVQDIT) are enriched in polar residues. The stretch at 844 to 940 (EKEVKARTQE…RREAMAGTID (97 aa)) forms a coiled coil. Basic and acidic residues-rich tracts occupy residues 859–874 (LEHN…ENQR) and 915–934 (LLKD…RREA).

This sequence belongs to the BET family. In terms of assembly, interacts with SMARCE1. Interacts with mRNA splicing machinery proteins SRSF2, DDX5, HNRNPK and TARDBP. Interacts with the acetylated N-terminus of histone H1, H2, H3 and H4. Interacts with P-TEFb components CDK9 and CCNT1/cyclin-T1. In terms of processing, ubiquitinated in a SPOP-dependent manner, leading to proteasomal degradation. As to expression, testis-specific. Expressed in germinal cells from the early meiotic (pachytene) spermatocytes and during spermiogenesis in the round and elongating spermatids until the condensed late spermatids. No expression seen in spermatogonia.

The protein localises to the nucleus. Testis-specific chromatin protein that specifically binds histone H4 acetylated at 'Lys-5' and 'Lys-8' (H4K5ac and H4K8ac, respectively) and plays a key role in spermatogenesis. Required in late pachytene spermatocytes: plays a role in meiotic and post-meiotic cells by binding to acetylated histones at the promoter of specific meiotic and post-meiotic genes, facilitating their activation at the appropriate time. In the post-meiotic phase of spermatogenesis, binds to hyperacetylated histones and participates in their general removal from DNA. Also recognizes and binds a subset of butyrylated histones: able to bind histone H4 butyrylated at 'Lys-8' (H4K8ac), while it is not able to bind H4 butyrylated at 'Lys-5' (H4K5ac). Also acts as a component of the splicing machinery in pachytene spermatocytes and round spermatids and participates in 3'-UTR truncation of specific mRNAs in post-meiotic spermatids. Required for chromocenter organization, a structure comprised of peri-centromeric heterochromatin. This chain is Bromodomain testis-specific protein (Brdt), found in Mus musculus (Mouse).